We begin with the raw amino-acid sequence, 168 residues long: Ubiquitin-fold modifier-conjugating enzyme 1 (168 aa).

The active-site Glycyl thioester intermediate is Cys-119.

This sequence belongs to the ubiquitin-conjugating enzyme family. UFC1 subfamily.

Its function is as follows. E2-like enzyme which forms an intermediate with UFM1 via a thioester linkage. This is Ubiquitin-fold modifier-conjugating enzyme 1 from Drosophila grimshawi (Hawaiian fruit fly).